The following is a 950-amino-acid chain: 5'-3' exoribonuclease 2 (950 aa).

The CCHC-type zinc finger occupies 262–278; sequence PCGLCNQFGHEVKDCEG. K286 carries the N6-acetyllysine modification. The segment at 408–508 is disordered; the sequence is KDDEDSFRRR…SDSEPEPEDN (101 aa). A compositionally biased stretch (basic residues) spans 416–426; sequence RRQKEKRKRMK. T439 carries the phosphothreonine modification. The segment covering 445–458 has biased composition (polar residues); it reads SRNSPGSQVASNPR. S448, S471, S473, S475, S482, S487, S499, S501, and S678 each carry phosphoserine. Residues 468–482 show a composition bias toward low complexity; sequence NNSSPSISPNTSFTS. An asymmetric dimethylarginine; alternate mark is found at R824, R847, and R851. R824, R847, and R851 each carry omega-N-methylarginine; alternate. Position 880 is an asymmetric dimethylarginine (R880). R883 carries the asymmetric dimethylarginine; alternate modification. R883 bears the Omega-N-methylarginine; alternate mark. Position 895 is an omega-N-methylarginine (R895). The tract at residues 911 to 950 is disordered; it reads MLAGPGGYPPRRDDRGGRQGYPREGRKYPLPPPSGRYNWN. Positions 920 to 937 are enriched in basic and acidic residues; the sequence is PRRDDRGGRQGYPREGRK. Asymmetric dimethylarginine; alternate is present on R946. An Omega-N-methylarginine; alternate modification is found at R946.

Belongs to the 5'-3' exonuclease family. XRN2/RAT1 subfamily. As to quaternary structure, interacts with POLR2A and SMN1/SMN2. Interacts with CDKN2AIP and NKRF. Interacts with CDKN2AIPNL; the interaction is direct. Interacts with TRIM71 (via NHL repeats) in an RNA-dependent manner. Interacts with DHX34; the interaction is RNA-independent. In terms of tissue distribution, expressed in the spleen, thymus, prostate, testis, ovary, small intestine, colon, peripheral blood leukocytes, heart, brain, placenta, lung, liver, skeletal muscle, kidney, and pancreas. Isoform 2 is expressed predominantly in peripheral blood leukocytes.

It is found in the nucleus. It localises to the nucleolus. Functionally, possesses 5'-&gt;3' exoribonuclease activity. May promote the termination of transcription by RNA polymerase II. During transcription termination, cleavage at the polyadenylation site liberates a 5' fragment which is subsequently processed to form the mature mRNA and a 3' fragment which remains attached to the elongating polymerase. The processive degradation of this 3' fragment by this protein may promote termination of transcription. Binds to RNA polymerase II (RNAp II) transcription termination R-loops formed by G-rich pause sites. This chain is 5'-3' exoribonuclease 2 (XRN2), found in Homo sapiens (Human).